The following is a 507-amino-acid chain: Dihydrolipoyl dehydrogenase 1, mitochondrial (507 aa).

The transit peptide at 1–36 directs the protein to the mitochondrion; it reads MAMASLARRKAYFLTRNLSNSPTDALRFSFSLSRGF. Residues 73–82, Lys-91, Gly-155, and 184–186 contribute to the FAD site; these read EKRGALGGTC and TGS. A disulfide bond links Cys-82 and Cys-87. NAD(+)-binding positions include 221–228, Glu-244, Val-278, and Gly-313; that span reads GAGYIGLE. FAD is bound by residues Asp-354 and 360 to 363; that span reads MLAH. The active-site Proton acceptor is the His-486.

It belongs to the class-I pyridine nucleotide-disulfide oxidoreductase family. In terms of assembly, homodimer. Part of both the glycine cleavage system composed of four proteins: P, T, L and H and of the pyruvate dehydrogenase complex containing multiple copies of three enzymatic components: pyruvate dehydrogenase (E1), dihydrolipoamide acetyltransferase (E2) and lipoamide dehydrogenase (E3). Requires FAD as cofactor. Post-translationally, S-nytrosylated at unknown positions. In terms of tissue distribution, preferentially expressed in leaves, flowers and siliques and at a lower level in roots and stems.

The protein localises to the mitochondrion matrix. The enzyme catalyses N(6)-[(R)-dihydrolipoyl]-L-lysyl-[protein] + NAD(+) = N(6)-[(R)-lipoyl]-L-lysyl-[protein] + NADH + H(+). Functionally, lipoamide dehydrogenase is a component of the glycine decarboxylase (GDC) or glycine cleavage system as well as of the alpha-ketoacid dehydrogenase complexes. LPD1 is probably the protein most often associated with the glycine decarboxylase complex while LPD2 is probably incorporated into alpha-ketoacid dehydrogenase complexes. The chain is Dihydrolipoyl dehydrogenase 1, mitochondrial (LPD1) from Arabidopsis thaliana (Mouse-ear cress).